A 407-amino-acid polypeptide reads, in one-letter code: Argininosuccinate synthase (407 aa).

ATP-binding positions include 11–19 (AYSGGLDTS) and A39. L-citrulline-binding residues include Y90 and S95. Residue G120 coordinates ATP. T122, N126, and D127 together coordinate L-aspartate. Position 126 (N126) interacts with L-citrulline. L-citrulline contacts are provided by R130, S179, S188, E264, and Y276.

The protein belongs to the argininosuccinate synthase family. Type 1 subfamily. As to quaternary structure, homotetramer.

The protein resides in the cytoplasm. It carries out the reaction L-citrulline + L-aspartate + ATP = 2-(N(omega)-L-arginino)succinate + AMP + diphosphate + H(+). The protein operates within amino-acid biosynthesis; L-arginine biosynthesis; L-arginine from L-ornithine and carbamoyl phosphate: step 2/3. The protein is Argininosuccinate synthase of Roseiflexus sp. (strain RS-1).